We begin with the raw amino-acid sequence, 553 residues long: Hydroxylamine reductase (553 aa).

Residues Cys3, Cys6, Cys18, and Cys25 each coordinate [2Fe-2S] cluster. Residues His252, Glu276, Cys320, Cys408, Cys436, Cys461, Glu495, and Lys497 each contribute to the hybrid [4Fe-2O-2S] cluster site. The residue at position 408 (Cys408) is a Cysteine persulfide.

It belongs to the HCP family. The cofactor is [2Fe-2S] cluster. Hybrid [4Fe-2O-2S] cluster is required as a cofactor.

It is found in the cytoplasm. It carries out the reaction A + NH4(+) + H2O = hydroxylamine + AH2 + H(+). Catalyzes the reduction of hydroxylamine to form NH(3) and H(2)O. This is Hydroxylamine reductase from Aliivibrio fischeri (strain ATCC 700601 / ES114) (Vibrio fischeri).